We begin with the raw amino-acid sequence, 445 residues long: Ribosomal protein uS12 methylthiotransferase RimO (445 aa).

In terms of domain architecture, MTTase N-terminal spans 4 to 119 (LKFGLVSLGC…LDDAIEDFFN (116 aa)). [4Fe-4S] cluster contacts are provided by C13, C48, C82, C156, C160, and C163. The Radical SAM core domain occupies 142 to 372 (TTGEYSSYVR…MLIQQQVSKN (231 aa)). The TRAM domain occupies 375–441 (AKKIGKVYKV…EYDLIGVVYN (67 aa)).

Belongs to the methylthiotransferase family. RimO subfamily. It depends on [4Fe-4S] cluster as a cofactor.

The protein resides in the cytoplasm. The catalysed reaction is L-aspartate(89)-[ribosomal protein uS12]-hydrogen + (sulfur carrier)-SH + AH2 + 2 S-adenosyl-L-methionine = 3-methylsulfanyl-L-aspartate(89)-[ribosomal protein uS12]-hydrogen + (sulfur carrier)-H + 5'-deoxyadenosine + L-methionine + A + S-adenosyl-L-homocysteine + 2 H(+). In terms of biological role, catalyzes the methylthiolation of an aspartic acid residue of ribosomal protein uS12. The chain is Ribosomal protein uS12 methylthiotransferase RimO from Clostridium acetobutylicum (strain ATCC 824 / DSM 792 / JCM 1419 / IAM 19013 / LMG 5710 / NBRC 13948 / NRRL B-527 / VKM B-1787 / 2291 / W).